Consider the following 446-residue polypeptide: C4-dicarboxylate transport protein (446 aa).

9 helical membrane-spanning segments follow: residues 20–40 (HLYVQVLAAIAIGILLGHFYP), 56–76 (LVKMVIAPVIFLTVVTGIAGM), 91–111 (IYFLTFSTLALIIGLIIANVV), 160–180 (GDILQVLFFSVLFGIALAGVG), 200–220 (LVHILMKAAPIGAFGAMAFTI), 233–253 (FLILTFYITSFLFVVVVLGLV), 319–339 (IYMTLAALFIAQATDIHLSLG), 344–364 (LLLVAMLSSKGAAGITGAGFI), and 367–387 (AATLSVVPTVPLAGMALILGI).

It belongs to the dicarboxylate/amino acid:cation symporter (DAACS) (TC 2.A.23) family.

The protein localises to the cell inner membrane. Its function is as follows. Responsible for the transport of dicarboxylates such as succinate, fumarate, and malate from the periplasm across the membrane. This Azorhizobium caulinodans (strain ATCC 43989 / DSM 5975 / JCM 20966 / LMG 6465 / NBRC 14845 / NCIMB 13405 / ORS 571) protein is C4-dicarboxylate transport protein.